Here is a 423-residue protein sequence, read N- to C-terminus: G-protein coupled receptor 83 (423 aa).

Residues 1–17 (MKVPPVLLLFLLSSVRA) form the signal peptide. The Extracellular portion of the chain corresponds to 18–71 (TEQPQVVTEHPSMEAALTGPNASSHFWANYTFSDWQNFVGRRRYGAESQNPTVK). N38 and N46 each carry an N-linked (GlcNAc...) asparagine glycan. Residues 72 to 92 (ALLIVAYSFTIVFSLFGNVLV) form a helical membrane-spanning segment. Topologically, residues 93–107 (CHVIFKNQRMHSATS) are cytoplasmic. The chain crosses the membrane as a helical span at residues 108–129 (LFIVNLAVADIMITLLNTPFTL). The Extracellular portion of the chain corresponds to 130 to 145 (VRFVNSTWVFGKGMCH). N134 is a glycosylation site (N-linked (GlcNAc...) asparagine). A disulfide bond links C144 and C224. Residues 146-167 (VSRFAQYCSLHVSALTLTAIAV) form a helical membrane-spanning segment. At 168–186 (DRHQVIMHPLKPRISITKG) the chain is on the cytoplasmic side. Residues 187-208 (VIYIAVIWVMATFFSLPHAICQ) traverse the membrane as a helical segment. At 209–238 (KLFTFKYSEDIVRSLCLPDFPEPADLFWKY) the chain is on the extracellular side. A helical membrane pass occupies residues 239–260 (LDLATFILLYLLPLFIISVAYA). The Cytoplasmic segment spans residues 261 to 293 (RVAKKLWLCNTIGDVTTEQYLALRRKKKTTVKM). Residues 294 to 315 (LVLVVVLFALCWFPLNCYVLLL) traverse the membrane as a helical segment. Residues 316–327 (SSKAIHTNNALY) lie on the Extracellular side of the membrane. Residues 328 to 348 (FAFHWFAMSSTCYNPFIYCWL) traverse the membrane as a helical segment. Residues 349-423 (NENFRVELKA…SSVEPVVAMS (75 aa)) are Cytoplasmic-facing. The interval 389–423 (SHGRRAPLPNHHLPSSQIQSGKTDLSSVEPVVAMS) is disordered. A compositionally biased stretch (polar residues) spans 401–414 (LPSSQIQSGKTDLS).

It belongs to the G-protein coupled receptor 1 family. In terms of tissue distribution, predominantly expressed in the brain, with moderate expression in the hypothalamus. Expressed in the thymus.

It localises to the cell membrane. In terms of biological role, G-protein coupled receptor for PEN, a neuropeptide produced from the precursor protein, proSAAS (encoded by PCSK1N). Acts through a G(i)- and G(q)-alpha-alpha-mediated pathway in response to PEN. Plays a role in food intake and body weight regulation. May contribute to the regulation of anxiety-related behaviors. This is G-protein coupled receptor 83 from Mus musculus (Mouse).